The chain runs to 110 residues: Hydrogenase maturation factor HypA (110 aa).

His2 lines the Ni(2+) pocket. Residues Cys70, Cys73, Cys86, and Cys89 each coordinate Zn(2+).

It belongs to the HypA/HybF family.

Involved in the maturation of [NiFe] hydrogenases. Required for nickel insertion into the metal center of the hydrogenase. This chain is Hydrogenase maturation factor HypA, found in Geobacter metallireducens (strain ATCC 53774 / DSM 7210 / GS-15).